The sequence spans 112 residues: Integration host factor subunit alpha (112 aa).

The protein belongs to the bacterial histone-like protein family. As to quaternary structure, heterodimer of an alpha and a beta chain.

Functionally, this protein is one of the two subunits of integration host factor, a specific DNA-binding protein that functions in genetic recombination as well as in transcriptional and translational control. The polypeptide is Integration host factor subunit alpha (Rhizobium etli (strain CIAT 652)).